The sequence spans 650 residues: Amyloid beta precursor like protein 1 (650 aa).

An N-terminal signal peptide occupies residues 1–38 (MGPASPAARGLSRRPGQPPLPLLLPLLLLLLRAQPAIG). The Extracellular portion of the chain corresponds to 39 to 580 (SLAGGSPGAA…APAGTGVSRE (542 aa)). The tract at residues 50–146 (APGSAQVAGL…PFRCLPGEFV (97 aa)) is GFLD subdomain. In terms of domain architecture, E1 spans 50 to 212 (APGSAQVAGL…RGVEYVCCPP (163 aa)). Intrachain disulfides connect C60-C84, C95-C140, C120-C128, C156-C210, C167-C197, and C181-C209. Residues 154 to 212 (EGCRFLHQERMDQCESSTRRHQEAQEACSSQGLILHGSGMLLPCGSDRFRGVEYVCCPP) are cuBD subdomain. Cu(2+) is bound at residue H174. Positions 206, 209, and 210 each coordinate Zn(2+). A disordered region spans residues 214 to 287 (GTPDPSGTAV…LAVVGKVTPT (74 aa)). T215 is a glycosylation site (O-linked (GalNAc...) threonine). O-linked (GalNAc...) serine glycosylation occurs at S227. T228 is a glycosylation site (O-linked (GalNAc...) threonine). Residues 285–305 (TPTPRPTDGVDIYFGMPGEIS) form an O-glycosylated at three sites region. The 192-residue stretch at 293–484 (GVDIYFGMPG…QELRPQIQEL (192 aa)) folds into the E2 domain. 2 heparin-binding regions span residues 310 to 342 (FLRAKMDLEERRMRQINEVMREWAMADNQSKNL) and 410 to 441 (LLALRRYLRAEQKEQRHTLRHYQHVAAVDPEK). N337 carries an N-linked (GlcNAc...) asparagine glycan. Positions 442–459 (AQQMRFQVHTHLQVIEER) are collagen-binding. N461 is a glycosylation site (N-linked (GlcNAc...) asparagine). The segment at 492–546 (PSELEAPAPGGSSEDKGGLQPPDSKDDTPMTLPKGSTEQDAASPEKEKMNPLEQY) is disordered. Composition is skewed to basic and acidic residues over residues 504–519 (SEDKGGLQPPDSKDDT) and 534–546 (SPEKEKMNPLEQY). An N-linked (GlcNAc...) asparagine glycan is attached at N551. H561 contributes to the Cu(2+) binding site. Zn(2+) is bound at residue H561. Residues 581–603 (AVSGLLIMGAGGGSLIVLSMLLL) traverse the membrane as a helical segment. A Basolateral sorting signal motif is present at residues 604 to 615 (RRKKPYGAISHG). The Cytoplasmic segment spans residues 604 to 650 (RRKKPYGAISHGVVEVDPMLTLEEQQLRELQRHGYENPTYRFLEERP). Positions 632-649 (ELQRHGYENPTYRFLEER) are interaction with DAB1. The tract at residues 636 to 650 (HGYENPTYRFLEERP) is interaction with DAB2. The Clathrin-binding signature appears at 640-643 (NPTY). The short motif at 640 to 643 (NPTY) is the NPXY motif; contains endocytosis signal element.

The protein belongs to the APP family. Monomer and homodimer. Heparin binding promotes homodimerization. Binds, via its C-terminus, to the PID domain of several cytoplasmic proteins, including APBB and APBA family members, MAPK8IP1 and DAB1. Binding to Dab1 inhibits its serine phosphorylation. Interacts with CPEB1. Interacts (via NPXY motif) with DAB2 (via PID domain); the interaction is impaired by tyrosine phosphorylation of the NPXY motif. Interacts (via NPXY motif) with DAB1. In terms of processing, proteolytically cleaved by caspases during neuronal apoptosis. Cleaved, in vitro, at Asp-620 by caspase-3. N- and O-glycosylated. O-glycosylation with core 1 or possibly core 8 glycans. Glycosylation on Ser-227 is the preferred site to Thr-228. In terms of tissue distribution, expressed in the cerebral cortex where it is localized to the postsynaptic density (PSD).

The protein resides in the cell membrane. The protein localises to the cytoplasm. Its function is as follows. May play a role in postsynaptic function. The C-terminal gamma-secretase processed fragment, ALID1, activates transcription activation through APBB1 (Fe65) binding. Couples to JIP signal transduction through C-terminal binding. May interact with cellular G-protein signaling pathways. Can regulate neurite outgrowth through binding to components of the extracellular matrix such as heparin and collagen I. In terms of biological role, the gamma-CTF peptide, C30, is a potent enhancer of neuronal apoptosis. This is Amyloid beta precursor like protein 1 (APLP1) from Homo sapiens (Human).